The sequence spans 455 residues: Keratin, type I cuticular Ha5 (455 aa).

The head stretch occupies residues 1–97 (MASKCLKASF…FGEGILTGNE (97 aa)). One can recognise an IF rod domain in the interval 97–408 (EKETMQFLND…GLLDSEDCKL (312 aa)). Residues 98–132 (KETMQFLNDRLASYLEKVRQLERENAELESRIRDW) form a coil 1A region. Positions 133–143 (CEQQVPYLCPD) are linker 1. The coil 1B stretch occupies residues 144–244 (YQSYFQTIEE…HEEEVNSLRC (101 aa)). Positions 245 to 260 (QLGDRLNVEVDAAPPV) are linker 12. The coil 2 stretch occupies residues 261-404 (DLNRVLNEMR…STYRGLLDSE (144 aa)). Positions 405–455 (DCKLPCNPCAPDHSPSKSCLPCLPAASCGPGTAHTTCSPRPICVSCPGSRF) are tail.

The protein belongs to the intermediate filament family.

The chain is Keratin, type I cuticular Ha5 from Ovis aries (Sheep).